Consider the following 459-residue polypeptide: Glutamate--isopropylamine ligase (459 aa).

In terms of domain architecture, GS beta-grasp spans H19–G115. The 338-residue stretch at P122–I459 folds into the GS catalytic domain.

This sequence belongs to the glutamine synthetase family.

The enzyme catalyses isopropylamine + L-glutamate + ATP = gamma-L-glutamyl-isopropylamide + ADP + phosphate + H(+). Functionally, involved in the degradation of isopropylamine, which is a constituent of the herbicides atrazine. Catalyzes the ATP-dependent formation of gamma-glutamyl-isopropylamide from isopropylamine and L-glutamate. It can also use aminoalkanes, amino-alcohols (L-alaninol and D-alaninol) and amino-esters as substrates. The sequence is that of Glutamate--isopropylamine ligase (ipuC) from Pseudomonas sp.